A 567-amino-acid polypeptide reads, in one-letter code: Urease subunit alpha (567 aa).

The region spanning 129 to 567 (GGVDTHIHWI…LPMAQRYFLF (439 aa)) is the Urease domain. Positions 134, 136, and 217 each coordinate Ni(2+). Lysine 217 carries the post-translational modification N6-carboxylysine. Residue histidine 219 coordinates substrate. The Ni(2+) site is built by histidine 246 and histidine 272. Histidine 320 functions as the Proton donor in the catalytic mechanism. Aspartate 360 serves as a coordination point for Ni(2+).

The protein belongs to the metallo-dependent hydrolases superfamily. Urease alpha subunit family. In terms of assembly, heterotrimer of UreA (gamma), UreB (beta) and UreC (alpha) subunits. Three heterotrimers associate to form the active enzyme. Ni cation is required as a cofactor. Post-translationally, carboxylation allows a single lysine to coordinate two nickel ions.

It is found in the cytoplasm. The enzyme catalyses urea + 2 H2O + H(+) = hydrogencarbonate + 2 NH4(+). It functions in the pathway nitrogen metabolism; urea degradation; CO(2) and NH(3) from urea (urease route): step 1/1. The polypeptide is Urease subunit alpha (Citrobacter koseri (strain ATCC BAA-895 / CDC 4225-83 / SGSC4696)).